The sequence spans 191 residues: Ribosomal RNA small subunit methyltransferase G (191 aa).

S-adenosyl-L-methionine contacts are provided by residues G59, 111-112 (IE), and R124.

The protein belongs to the methyltransferase superfamily. RNA methyltransferase RsmG family.

It is found in the cytoplasm. In terms of biological role, specifically methylates the N7 position of a guanine in 16S rRNA. The polypeptide is Ribosomal RNA small subunit methyltransferase G (Mycoplasma pneumoniae (strain ATCC 29342 / M129 / Subtype 1) (Mycoplasmoides pneumoniae)).